The chain runs to 1224 residues: Probable serine/threonine-protein kinase DDB_G0292350 (1224 aa).

2 disordered regions span residues 57-98 (MSGS…STQR) and 252-284 (SSPS…DISN). Composition is skewed to low complexity over residues 58–74 (SGSI…FTSS) and 83–95 (SSSN…SDNS). Coiled coils occupy residues 352–381 (LFKQ…KQNN) and 540–569 (DVQL…EYLT). Disordered regions lie at residues 693–784 (QPIP…FVIT) and 815–836 (FTNN…TNNI). Positions 743–768 (NNNNNNNNNINNNNINNNNINNNKNG) are enriched in low complexity. A compositionally biased stretch (polar residues) spans 772–784 (GETPSPSSSFVIT). The 259-residue stretch at 935–1193 (FRDKIKLGTG…PEMLLHHTFL (259 aa)) folds into the Protein kinase domain. Residues 941–949 (LGTGAFGNV) and K964 each bind ATP. The Proton acceptor role is filled by D1063.

It belongs to the protein kinase superfamily. Ser/Thr protein kinase family. Requires Mg(2+) as cofactor.

It carries out the reaction L-seryl-[protein] + ATP = O-phospho-L-seryl-[protein] + ADP + H(+). It catalyses the reaction L-threonyl-[protein] + ATP = O-phospho-L-threonyl-[protein] + ADP + H(+). This is Probable serine/threonine-protein kinase DDB_G0292350 from Dictyostelium discoideum (Social amoeba).